Here is a 24-residue protein sequence, read N- to C-terminus: Coenzyme PQQ synthesis protein A (24 aa).

A cross-link (pyrroloquinoline quinone (Glu-Tyr)) is located at residues 16–20; the sequence is EITMY.

It belongs to the PqqA family.

It functions in the pathway cofactor biosynthesis; pyrroloquinoline quinone biosynthesis. Its function is as follows. Required for coenzyme pyrroloquinoline quinone (PQQ) biosynthesis. PQQ is probably formed by cross-linking a specific glutamate to a specific tyrosine residue and excising these residues from the peptide. The chain is Coenzyme PQQ synthesis protein A from Burkholderia cenocepacia (strain ATCC BAA-245 / DSM 16553 / LMG 16656 / NCTC 13227 / J2315 / CF5610) (Burkholderia cepacia (strain J2315)).